The chain runs to 95 residues: Synaptobrevin-A (95 aa).

At Met-1–Lys-70 the chain is on the cytoplasmic side. The 61-residue stretch at Lys-7–Arg-67 folds into the v-SNARE coiled-coil homology domain. The chain crosses the membrane as a helical; Anchor for type IV membrane protein span at residues Leu-71–Val-91. At Leu-92 to Thr-95 the chain is on the vesicular side.

Belongs to the synaptobrevin family.

Its subcellular location is the cytoplasmic vesicle. It is found in the secretory vesicle membrane. Functionally, involved in the targeting and/or fusion of transport vesicles to their target membrane. In Dictyostelium discoideum (Social amoeba), this protein is Synaptobrevin-A (sybA).